Reading from the N-terminus, the 327-residue chain is Phenylalanine--tRNA ligase alpha subunit (327 aa).

Residue glutamate 252 participates in Mg(2+) binding.

It belongs to the class-II aminoacyl-tRNA synthetase family. Phe-tRNA synthetase alpha subunit type 1 subfamily. Tetramer of two alpha and two beta subunits. Requires Mg(2+) as cofactor.

Its subcellular location is the cytoplasm. The enzyme catalyses tRNA(Phe) + L-phenylalanine + ATP = L-phenylalanyl-tRNA(Phe) + AMP + diphosphate + H(+). This Salmonella choleraesuis (strain SC-B67) protein is Phenylalanine--tRNA ligase alpha subunit.